The sequence spans 162 residues: Allophycocyanin beta chain (162 aa).

At Asn72 the chain carries N4-methylasparagine. Cys82 serves as a coordination point for (2R,3E)-phycocyanobilin.

The protein belongs to the phycobiliprotein family. In terms of assembly, heterodimer of an alpha and a beta chain. Contains one covalently linked phycocyanobilin chromophore.

It is found in the cellular thylakoid membrane. In terms of biological role, light-harvesting photosynthetic bile pigment-protein from the phycobiliprotein complex. Allophycocyanin has a maximum absorption at approximately 650 nanometers. The chain is Allophycocyanin beta chain from Microchaete diplosiphon (Fremyella diplosiphon).